We begin with the raw amino-acid sequence, 505 residues long: Catalase (505 aa).

Residues His56 and Asn129 contribute to the active site. Tyr339 lines the heme pocket.

It belongs to the catalase family. Heme serves as cofactor.

It is found in the cytoplasm. It catalyses the reaction 2 H2O2 = O2 + 2 H2O. Decomposes hydrogen peroxide into water and oxygen; serves to protect cells from the toxic effects of hydrogen peroxide. This is Catalase (katA) from Helicobacter pylori (strain J99 / ATCC 700824) (Campylobacter pylori J99).